The following is a 503-amino-acid chain: MNRRRWWRSSERRWRGLVSLFLSVLSGFLTALSMPGFLSGALIWFSLIPLLYAVEGRGVWKRAFLSFVYFFTHVLISFFWVLPTLTENVPLVFGRYPSWLGIVVFVLMGIIEAVPFLGFGFLSYFAPQSIVLKTLYLASVYTIFEYLRGVGELGFTGGRISEALYSHTGLIQIVSITGTLGLVFLIVSLNVLFYEFLRRRKGLLIFPVIFFVYLLNSSVVHLLPVPERGSFKVVALQPNVPTSLKYSVSSGEMLELLESMTKDFHGSIVITPEAFFLEDVRYSQKLRELSEENTFVIGFPADNQNSVFVLEGGRFRKVYSKVKLFPFVEKLPYPRVFGVFSFLKGLSYYEPGRNFSVFNVGESPPLSVQICFESYFPEVSRAFVKNGSELLIVVTNDGWFHYKAALLNHFVQGVFRAVETRRQFLQVANTGITGLVDEYGRIVDALPLRVRLAGEFHIKARKGETFYVRYGDWFFYLSVILAVVSVFISRMRGERNEGIGIRL.

The next 7 membrane-spanning stretches (helical) occupy residues 13–32 (RWRG…LTAL), 34–54 (MPGF…LYAV), 63–83 (AFLS…WVLP), 102–122 (IVVF…FGFL), 124–144 (YFAP…YTIF), 173–193 (IVSI…NVLF), and 203–223 (LLIF…VHLL). Positions 231 to 460 (FKVVALQPNV…RLAGEFHIKA (230 aa)) constitute a CN hydrolase domain. Glu273 acts as the Proton acceptor in catalysis. Residue Lys321 is part of the active site. Catalysis depends on Cys371, which acts as the Nucleophile. A helical membrane pass occupies residues 468–488 (VRYGDWFFYLSVILAVVSVFI).

Belongs to the CN hydrolase family. Apolipoprotein N-acyltransferase subfamily.

The protein localises to the cell inner membrane. The enzyme catalyses N-terminal S-1,2-diacyl-sn-glyceryl-L-cysteinyl-[lipoprotein] + a glycerophospholipid = N-acyl-S-1,2-diacyl-sn-glyceryl-L-cysteinyl-[lipoprotein] + a 2-acyl-sn-glycero-3-phospholipid + H(+). The protein operates within protein modification; lipoprotein biosynthesis (N-acyl transfer). In terms of biological role, catalyzes the phospholipid dependent N-acylation of the N-terminal cysteine of apolipoprotein, the last step in lipoprotein maturation. This Thermotoga maritima (strain ATCC 43589 / DSM 3109 / JCM 10099 / NBRC 100826 / MSB8) protein is Apolipoprotein N-acyltransferase.